Reading from the N-terminus, the 223-residue chain is Bone marrow proteoglycan (223 aa).

The signal sequence occupies residues Met1 to Ala16. The propeptide at Leu17–Lys106 is acidic. The tract at residues Ser20–Gln81 is disordered. Thr23 carries an O-linked (GalNAc...) threonine; partial glycan. An O-linked (GalNAc...) serine glycan is attached at Ser24. Ser66 is a glycosylation site (O-linked (Xyl...) (chondroitin sulfate) serine). The region spanning Ser124 to Tyr223 is the C-type lectin domain. 2 cysteine pairs are disulfide-bonded: Cys126–Cys221 and Cys198–Cys213.

In terms of processing, nitrated.

It is found in the secreted. Functionally, cytotoxin and helminthotoxin. MBP also induces non-cytolytic histamine release from basophils. It is involved in antiparasitic defense mechanisms and immune hypersensitivity reactions. This is Bone marrow proteoglycan (Prg2) from Mus musculus (Mouse).